A 172-amino-acid polypeptide reads, in one-letter code: uncharacterized protein (172 aa).

The N-terminal stretch at M1–G22 is a signal peptide. Over L23–T140 the chain is Extracellular. Residues H27–S69 form a disordered region. Over residues G29–A42 the composition is skewed to basic residues. Positions S53 to S69 are enriched in low complexity. N-linked (GlcNAc...) asparagine glycans are attached at residues N135 and N138. Residues I141–I161 form a helical membrane-spanning segment. Residues V162–Y172 are Cytoplasmic-facing.

Its subcellular location is the membrane. This is an uncharacterized protein from Dictyostelium discoideum (Social amoeba).